A 380-amino-acid polypeptide reads, in one-letter code: Protein arginine N-methyltransferase PRMT10 (380 aa).

The SAM-dependent MTase PRMT-type domain maps to 26–357 (EVDFANYFCT…KENHRLMDME (332 aa)). The S-adenosyl-L-methionine site is built by glutamine 42, arginine 51, glycine 75, glutamate 97, and glutamate 126. Active-site residues include glutamate 140 and glutamate 149. The interval 187–227 (ENKMEDLEIAMHDWNLFVEDTESYYGVNMNVLTKAYRAEHE) is dimerization arm.

This sequence belongs to the class I-like SAM-binding methyltransferase superfamily. Protein arginine N-methyltransferase family. Ring-like homodimer.

The enzyme catalyses L-arginyl-[protein] + 2 S-adenosyl-L-methionine = N(omega),N(omega)-dimethyl-L-arginyl-[protein] + 2 S-adenosyl-L-homocysteine + 2 H(+). Its function is as follows. Methylates (mono and asymmetric dimethylation) the guanidino nitrogens of arginyl residues in some proteins. The protein is Protein arginine N-methyltransferase PRMT10 (PRMT10) of Oryza sativa subsp. japonica (Rice).